A 263-amino-acid chain; its full sequence is HTH-type transcriptional repressor NanR (263 aa).

The tract at residues Met-1–Asn-21 is disordered. Residues Lys-30–Pro-98 form the HTH gntR-type domain. A DNA-binding region (H-T-H motif) is located at residues Glu-58–Ala-77.

Belongs to the NanR family.

Transcriptional repressor that controls expression of the genes required for the catabolism of sialic acids. The polypeptide is HTH-type transcriptional repressor NanR (Escherichia coli O7:K1 (strain IAI39 / ExPEC)).